We begin with the raw amino-acid sequence, 575 residues long: Golgi-associated kinase 1A (575 aa).

Positions 1–29 (MASWLRRKLRGKRRPVIAFCLLMILSAMA) are cleaved as a signal peptide. Positions 30 to 119 (VTRFPPQRPS…GDLRHPGRVR (90 aa)) are cleaved as a propeptide — removed in mature form. The tract at residues 53–58 (TGAPAT) is O-glycosylated at one site. The span at 143-153 (VGDPGTKDLGH) shows a compositional bias: basic and acidic residues. A disordered region spans residues 143-162 (VGDPGTKDLGHPQHGSPIQE). A propeptide spans 437–575 (RYCCGFEPEP…NLTLFRDEDP (139 aa)) (removed in mature form). N-linked (GlcNAc...) asparagine glycosylation occurs at Asn566.

This sequence belongs to the GASK family. In terms of processing, O-glycosylated with core 1 or possibly core 8 glycans. Proteolytically cleaved. Cleaved at Arg-120 and Arg-437 leading to a processed mature product of 35 kDa. The cleavage takes place in the Golgi apparatus. As to expression, expressed in skin, lung and colon (at protein level).

It localises to the secreted. Its subcellular location is the endoplasmic reticulum. The protein localises to the golgi apparatus. It is found in the membrane. The protein resides in the caveola. This is Golgi-associated kinase 1A from Homo sapiens (Human).